The chain runs to 1213 residues: A disintegrin and metalloproteinase with thrombospondin motifs 2 (1213 aa).

Positions 1-28 are cleaved as a signal peptide; sequence MDPPAGAARRLLCPALLLLLLPPPPLLL. The propeptide occupies 29–260; sequence LPPPPASVRL…INSSRRRVRR (232 aa). Asn-111 carries N-linked (GlcNAc...) asparagine glycosylation. A disordered region spans residues 211–232; it reads YRRPPTPKPPPVSEPQALDTGV. Positions 214–223 are enriched in pro residues; the sequence is PPTPKPPPVS. An N-linked (GlcNAc...) asparagine glycan is attached at Asn-252. The Peptidase M12B domain maps to 267 to 471; that stretch reads YNIEVLLGVD…HSYDCLRDDP (205 aa). Intrachain disulfides connect Cys-344–Cys-393, Cys-387–Cys-466, Cys-426–Cys-452, Cys-493–Cys-518, Cys-504–Cys-527, Cys-513–Cys-546, Cys-540–Cys-551, Cys-574–Cys-611, Cys-578–Cys-616, and Cys-589–Cys-601. Residue His-409 participates in Zn(2+) binding. Residue Glu-410 is part of the active site. The Zn(2+) site is built by His-413 and His-419. The region spanning 480–560 is the Disintegrin domain; it reads PQLPGLHYSM…CIWLTPDILK (81 aa). The region spanning 561-617 is the TSP type-1 1 domain; sequence RDGNWGAWTPFGSCSRTCGTGVKFRTRQCDNPHPANGGRTCSGLAYDFQLCNPQDCP. The short motif at 692–694 is the Cell attachment site element; that stretch reads RGD. A spacer region spans residues 723–851; sequence CKVVKGTFTR…LNVDDNNVLE (129 aa). 3 TSP type-1 domains span residues 855–913, 915–975, and 976–1030; these read VRHE…NPQE, SQPV…NREL, and CPGR…APCP. Asn-949, Asn-950, and Asn-994 each carry an N-linked (GlcNAc...) asparagine glycan. 3 disulfide bridges follow: Cys-988-Cys-1024, Cys-992-Cys-1029, and Cys-1003-Cys-1013. The N-linked (GlcNAc...) asparagine glycan is linked to Asn-1032. The region spanning 1060 to 1098 is the PLAC domain; that stretch reads SKDQCQGDKSMFCRMEVLSRYCSIPSYNKLCCKSCNPPR. Residues Asn-1099, Asn-1147, and Asn-1152 are each glycosylated (N-linked (GlcNAc...) asparagine).

May belong to a multimeric complex. Binds specifically to collagen type XIV. Requires Zn(2+) as cofactor. Post-translationally, the precursor is cleaved by a furin endopeptidase. In terms of processing, glycosylated. Can be O-fucosylated by POFUT2 on a serine or a threonine residue found within the consensus sequence C1-X(2)-(S/T)-C2-G of the TSP type-1 repeat domains where C1 and C2 are the first and second cysteine residue of the repeat, respectively. Fucosylated repeats can then be further glycosylated by the addition of a beta-1,3-glucose residue by the glucosyltransferase, B3GALTL. Fucosylation mediates the efficient secretion of ADAMTS family members. Can also be C-glycosylated with one or two mannose molecules on tryptophan residues within the consensus sequence W-X-X-W of the TPRs, and N-glycosylated. These other glycosylations can also facilitate secretion.

The protein localises to the secreted. It localises to the extracellular space. Its subcellular location is the extracellular matrix. The catalysed reaction is Cleaves the N-propeptide of collagen chain alpha1(I) at Pro-|-Gln and of alpha1(II) and alpha2(I) at Ala-|-Gln.. Functionally, cleaves the propeptides of type I and II collagen prior to fibril assembly. Does not act on type III collagen. Cleaves lysyl oxidase LOX at a site downstream of its propeptide cleavage site to produce a short LOX form with reduced collagen-binding activity. This Mus musculus (Mouse) protein is A disintegrin and metalloproteinase with thrombospondin motifs 2 (Adamts2).